Consider the following 499-residue polypeptide: Protein singed wings 2 (499 aa).

A signal peptide spans 1-29 (MPSGVFQKRPKAAETISLFCMILIRLSRA). 2 LRR repeats span residues 154 to 175 (ELHT…TFKR) and 178 to 199 (PLKV…LLLP). Positions 210-265 (NPWNCTRNFKWLLLQPEKGRLVVDRDELICTDRKYKERQMLMVMHYKLELKRQCQS) constitute an LRRCT 1 domain. LRR repeat units lie at residues 307–328 (NTTT…RDNP), 332–353 (HVVD…EDTY), and 357–378 (NFRL…ALDN). One can recognise an LRRCT 2 domain in the interval 394–449 (NPWHCTCKFGSRMRELLTKYKDIVRDAWNVSCTYRLDDDQLLAKVLTLSRQEMCNL).

Functionally, has a role in the ecdysone induced cascade; probably indirect control of 'late' ecdysone genes. This chain is Protein singed wings 2, found in Drosophila melanogaster (Fruit fly).